Reading from the N-terminus, the 256-residue chain is Ribosomal RNA large subunit methyltransferase E (256 aa).

Positions 50, 52, 69, 85, and 108 each coordinate S-adenosyl-L-methionine. Catalysis depends on K148, which acts as the Proton acceptor. Residues 195 to 253 (SLRKGDVVDVTIDAMGKTGDGIAHVDDFVVFVKGGSVGDKLKIKITDVKPSFAFADIVE) enclose the TRAM domain.

This sequence belongs to the class I-like SAM-binding methyltransferase superfamily. RNA methyltransferase RlmE family.

The protein resides in the cytoplasm. The catalysed reaction is uridine(2552) in 23S rRNA + S-adenosyl-L-methionine = 2'-O-methyluridine(2552) in 23S rRNA + S-adenosyl-L-homocysteine + H(+). In terms of biological role, specifically methylates the uridine in position 2552 of 23S rRNA at the 2'-O position of the ribose in the fully assembled 50S ribosomal subunit. In Methanocella arvoryzae (strain DSM 22066 / NBRC 105507 / MRE50), this protein is Ribosomal RNA large subunit methyltransferase E.